We begin with the raw amino-acid sequence, 273 residues long: MEQLQAVIENAFERRAEITPRNVEANLKESVAQVINMLDTGKLRVAEKINGEWVVHQWIKKAVLLSFRMEDNSFIKGGFSNYFDKIPSKFADYSSRDFRDGGFRVVPPAAVRKGSFIASNVVLMPSYVNIGAYVDEGTMVDTWATVGSCAQIGKNVHLSGGVGIGGVLEPVQASPTIIEDNCFIGARSEIVEGVVVGENSVISMGVYIGQSTKIYNRETGEITYGRIPPGSVVVSGNLPAENGRYSLYCAVIVKQVDAKTRSKTGINELLRGI.

Positions 104 and 141 each coordinate substrate.

Belongs to the transferase hexapeptide repeat family. Homotrimer.

The protein resides in the cytoplasm. It catalyses the reaction (S)-2,3,4,5-tetrahydrodipicolinate + succinyl-CoA + H2O = (S)-2-succinylamino-6-oxoheptanedioate + CoA. The protein operates within amino-acid biosynthesis; L-lysine biosynthesis via DAP pathway; LL-2,6-diaminopimelate from (S)-tetrahydrodipicolinate (succinylase route): step 1/3. The sequence is that of 2,3,4,5-tetrahydropyridine-2,6-dicarboxylate N-succinyltransferase from Nitrosomonas europaea (strain ATCC 19718 / CIP 103999 / KCTC 2705 / NBRC 14298).